The chain runs to 107 residues: Regulatory protein SoxS (107 aa).

The region spanning 8–106 is the HTH araC/xylS-type domain; that stretch reads QDLIAWIDEH…DRTPSDYRHR (99 aa). 2 consecutive DNA-binding regions (H-T-H motif) follow at residues 25–46 and 73–96; these read DVVAKKSGYSKWYLQRMFRTVT and IFDIAMDLGYVSQQTFSRVFRRQF.

It is found in the cytoplasm. In terms of biological role, transcriptional activator of the superoxide response regulon of E.coli that includes at least 10 genes such as sodA, nfo, zwf and micF. Binds the DNA sequence 5'-GCACN(7)CAA-3'. It also facilitates the subsequent binding of RNA polymerase to the micF and the nfo promoters. This is Regulatory protein SoxS (soxS) from Escherichia coli O157:H7.